The sequence spans 112 residues: Large ribosomal subunit protein eL30y (112 aa).

The protein belongs to the eukaryotic ribosomal protein eL30 family.

The sequence is that of Large ribosomal subunit protein eL30y (RPL30B) from Arabidopsis thaliana (Mouse-ear cress).